The sequence spans 115 residues: Large ribosomal subunit protein bL20 (115 aa).

Belongs to the bacterial ribosomal protein bL20 family.

Its function is as follows. Binds directly to 23S ribosomal RNA and is necessary for the in vitro assembly process of the 50S ribosomal subunit. It is not involved in the protein synthesizing functions of that subunit. This is Large ribosomal subunit protein bL20 from Myxococcus xanthus (strain DK1622).